Consider the following 75-residue polypeptide: Small ribosomal subunit protein bS18 (75 aa).

Belongs to the bacterial ribosomal protein bS18 family. In terms of assembly, part of the 30S ribosomal subunit. Forms a tight heterodimer with protein bS6.

Functionally, binds as a heterodimer with protein bS6 to the central domain of the 16S rRNA, where it helps stabilize the platform of the 30S subunit. This chain is Small ribosomal subunit protein bS18, found in Legionella pneumophila (strain Paris).